The primary structure comprises 201 residues: Peptide deformylase (201 aa).

Fe cation contacts are provided by cysteine 114 and histidine 156. Glutamate 157 is an active-site residue. A Fe cation-binding site is contributed by histidine 160.

Belongs to the polypeptide deformylase family. The cofactor is Fe(2+).

It carries out the reaction N-terminal N-formyl-L-methionyl-[peptide] + H2O = N-terminal L-methionyl-[peptide] + formate. Removes the formyl group from the N-terminal Met of newly synthesized proteins. Requires at least a dipeptide for an efficient rate of reaction. N-terminal L-methionine is a prerequisite for activity but the enzyme has broad specificity at other positions. The protein is Peptide deformylase of Tropheryma whipplei (strain TW08/27) (Whipple's bacillus).